The primary structure comprises 487 residues: NADH-quinone oxidoreductase subunit N (487 aa).

14 consecutive transmembrane segments (helical) span residues 8–28 (LIAMLPLLIVGLTVVVVMLSI), 35–55 (FINATLTVIGLNLALLSLYFV), 78–98 (GLVIIASLATSTFAYPWLVGY), 104–124 (EFYLLVLIAALGGILLASANH), 125–145 (LASLFLGIELLTLPLFGLIGY), 159–179 (YMLLSAAASSFLLFGMALLYA), 203–223 (ILAGLGMMIVGLGFKLSLVPF), 235–255 (PAPVSTFLATASKIAIFAVVM), 271–291 (LVLSIIAVASILFGNLMAISQ), 297–317 (LLGYSSIAHLGYLLIALVAVQ), 328–348 (IGVYLAGYLFSSLGAFGVVSL), 376–396 (AVMTVMMLSLAGIPMTLGFIG), 409–428 (LWWLTGAVVLGSAIGLYYYL), and 451–471 (ALTAGGVVVLISAILVLVLGI).

It belongs to the complex I subunit 2 family. As to quaternary structure, NDH-1 is composed of 13 different subunits. Subunits NuoA, H, J, K, L, M, N constitute the membrane sector of the complex.

It localises to the cell inner membrane. It carries out the reaction a quinone + NADH + 5 H(+)(in) = a quinol + NAD(+) + 4 H(+)(out). Its function is as follows. NDH-1 shuttles electrons from NADH, via FMN and iron-sulfur (Fe-S) centers, to quinones in the respiratory chain. The immediate electron acceptor for the enzyme in this species is believed to be ubiquinone. Couples the redox reaction to proton translocation (for every two electrons transferred, four hydrogen ions are translocated across the cytoplasmic membrane), and thus conserves the redox energy in a proton gradient. The chain is NADH-quinone oxidoreductase subunit N from Yersinia pseudotuberculosis serotype O:1b (strain IP 31758).